Reading from the N-terminus, the 453-residue chain is Kynureninase (453 aa).

Residues Leu-114, Thr-115, 142–145, Asp-232, His-235, and Tyr-257 each bind pyridoxal 5'-phosphate; that span reads FPSD. The residue at position 258 (Lys-258) is an N6-(pyridoxal phosphate)lysine. Position 286 (Trp-286) interacts with pyridoxal 5'-phosphate.

This sequence belongs to the kynureninase family. As to quaternary structure, homodimer. Pyridoxal 5'-phosphate is required as a cofactor.

The protein resides in the cytoplasm. The catalysed reaction is L-kynurenine + H2O = anthranilate + L-alanine + H(+). It catalyses the reaction 3-hydroxy-L-kynurenine + H2O = 3-hydroxyanthranilate + L-alanine + H(+). It functions in the pathway amino-acid degradation; L-kynurenine degradation; L-alanine and anthranilate from L-kynurenine: step 1/1. Its pathway is cofactor biosynthesis; NAD(+) biosynthesis; quinolinate from L-kynurenine: step 2/3. Its function is as follows. Catalyzes the cleavage of L-kynurenine (L-Kyn) and L-3-hydroxykynurenine (L-3OHKyn) into anthranilic acid (AA) and 3-hydroxyanthranilic acid (3-OHAA), respectively. The polypeptide is Kynureninase (Cryptococcus neoformans var. neoformans serotype D (strain B-3501A) (Filobasidiella neoformans)).